A 237-amino-acid polypeptide reads, in one-letter code: MDVVEKLVINGSGSSKGGTFQSVEINGSGTVAGDVECDTFSFNGNGKADGSVKAKAVTISGSGKIHGDVEAESIRMNGTGFIQGEVSAKQLKIAGSSTFGGTVKADGIDISGKAVMEADCETETFQSEGKCKISGLLNADQVIIKLSAGESYAREIGCRHLQVTCRKGMLTLLRLMPQPVLTAELIEGDVIELTNTKAKTVRGNKVIIGPDCQIETVEYSGDYTCDPSASVETSTKL.

The protein belongs to the bactofilin family.

This is an uncharacterized protein from Bacillus subtilis (strain 168).